The sequence spans 157 residues: Small ribosomal subunit protein uS7 (157 aa).

Belongs to the universal ribosomal protein uS7 family. In terms of assembly, part of the 30S ribosomal subunit. Contacts proteins S9 and S11.

In terms of biological role, one of the primary rRNA binding proteins, it binds directly to 16S rRNA where it nucleates assembly of the head domain of the 30S subunit. Is located at the subunit interface close to the decoding center, probably blocks exit of the E-site tRNA. The chain is Small ribosomal subunit protein uS7 from Chlamydia felis (strain Fe/C-56) (Chlamydophila felis).